A 290-amino-acid polypeptide reads, in one-letter code: Nucleoid occlusion protein (290 aa).

A DNA-binding region (H-T-H motif) is located at residues 153–172 (EALAQRLGKGQSTIANKLRL).

Belongs to the ParB family.

It is found in the cytoplasm. The protein localises to the nucleoid. In terms of biological role, effects nucleoid occlusion by binding relatively nonspecifically to DNA and preventing the assembly of the division machinery in the vicinity of the nucleoid, especially under conditions that disturb the cell cycle. It helps to coordinate cell division and chromosome segregation by preventing the formation of the Z ring through the nucleoid, which would cause chromosome breakage. This is Nucleoid occlusion protein from Bacillus cytotoxicus (strain DSM 22905 / CIP 110041 / 391-98 / NVH 391-98).